The sequence spans 229 residues: Protein MC132 (229 aa).

Interacts with host RELA (via RHD domain), ELOB, ELOC and CUL5; these interactions induce the proteasomal degradation of host RELA.

It localises to the host cytoplasm. Inhibits host NF-kappa-B activation stimulated by IL-1 and multiple PRR viral detection pathways. Targets host NF-kappa-B component RELA/p65 for ubiquitin-dependent proteasomal degradation. This chain is Protein MC132 (MC132), found in Homo sapiens (Human).